Consider the following 118-residue polypeptide: MVEKCYSCLICGYKGLIQNPLYKGEYQKTFDICPCCGFEFGYSEDHDVRLGFIVTPDHLIEAAFQLYRKQWLESGMVIAHPEDIPEELKNGNCLKFEVLLKQLKKLNLDIENFEISGF.

This is an uncharacterized protein from Bacillus subtilis (strain 168).